A 205-amino-acid polypeptide reads, in one-letter code: Ribosomal RNA small subunit methyltransferase G (205 aa).

S-adenosyl-L-methionine-binding positions include glycine 76, leucine 81, 127-128 (IE), and arginine 140.

It belongs to the methyltransferase superfamily. RNA methyltransferase RsmG family.

It localises to the cytoplasm. It catalyses the reaction guanosine(527) in 16S rRNA + S-adenosyl-L-methionine = N(7)-methylguanosine(527) in 16S rRNA + S-adenosyl-L-homocysteine. Its function is as follows. Specifically methylates the N7 position of guanine in position 527 of 16S rRNA. This is Ribosomal RNA small subunit methyltransferase G from Francisella tularensis subsp. tularensis (strain WY96-3418).